Reading from the N-terminus, the 346-residue chain is MSDDRRLAVLRAIVEDYVSSHEPVGSKALVERHQLGVSPATIRNDMAVLEEEGYITQPHTSAGRIPTDKGYRLFVDRLANVKPMSPAEKRAIQTFLEGADDVDDIVDRTVRLLAQITRQAAVVQYPSLSRAAVRHVELVPVGGRSALLVLITDSGRVEQRVLDVRSAADPESLAAALAALRTRVNARVVGKRLRDAREDLTDLVQQTPPGDLAVAAEVAVALGDCLTAGLEERVVIAGTANLVKSGADLSTSLGSVLEALEEHVVLLRLVQELTEDSDRGGLTVRIGAENLHLGLDGTSVVTSGYGTGPDTVLARLGVLGPTRMDYPTTMAAVRAVSRYVSRILAQ.

The protein belongs to the HrcA family.

Negative regulator of class I heat shock genes (grpE-dnaK-dnaJ and groELS operons). Prevents heat-shock induction of these operons. The polypeptide is Heat-inducible transcription repressor HrcA (Kineococcus radiotolerans (strain ATCC BAA-149 / DSM 14245 / SRS30216)).